We begin with the raw amino-acid sequence, 318 residues long: MPEYLLLPAGLISLSLAIAAGLYLLTARGYQSSDSVANAYDQWTEDGILEYYWGDHIHLGHYGDPPVAKDFIQSKIDFVHAMAQWGGLDTLPPGTTVLDVGCGIGGSSRILAKDYGFNVTGITISPQQVKRATELTPPDVTAKFAVDDAMALSFPDGSFDVVWSVEAGPHMPDKAVFAKELLRVVKPGGILVVADWNQRDDRQVPLNFWEKPVMRQLLDQWSHPAFASIEGFAENLEATGLVEGQVTTADWTVPTLPAWLDTIWQGIIRPQGWLQYGIRGFIKSVREVPTILLMRLAFGVGLCRFGMFKAVRKNATQA.

Positions 1–39 (MPEYLLLPAGLISLSLAIAAGLYLLTARGYQSSDSVANA) are cleaved as a signal peptide. Residues 97–106 (VLDVGCGIGG) form an SAM motif I region. The tract at residues 157-165 (GSFDVVWSV) is SAM motif II. The SAM motif III stretch occupies residues 184–193 (VVKPGGILVV).

This sequence belongs to the class I-like SAM-binding methyltransferase superfamily. gTMT family.

The enzyme catalyses 2-methyl-6-phytyl-1,4-benzene-1,4-diol + S-adenosyl-L-methionine = 2,3-dimethyl-6-phytylbenzene-1,4-diol + S-adenosyl-L-homocysteine + H(+). It carries out the reaction 2-methyl-6-(all-trans-nonaprenyl)benzene-1,4-diol + S-adenosyl-L-methionine = plastoquinol-9 + S-adenosyl-L-homocysteine + H(+). The catalysed reaction is 6-geranylgeranyl-2-methylbenzene-1,4-diol + S-adenosyl-L-methionine = 6-geranylgeranyl-2,3-dimethylbenzene-1,4-diol + S-adenosyl-L-homocysteine + H(+). Its pathway is cofactor biosynthesis; tocopherol biosynthesis. Its function is as follows. Involved in a key methylation step in both tocopherol (vitamin E) and plastoquinone synthesis. Catalyzes the conversion of 2-methyl-6-phytyl-1,4-hydroquinol (MPBQ) to 2,3-dimethyl-6-phytyl-1,4-hydroquinol (DMPQ, a substrate for tocopherol cyclase), and 2-methyl-6-solanyl-1,4-benzoquinol (MSBQ) to plastoquinol. This chain is 2-methyl-6-phytyl-1,4-hydroquinone methyltransferase, found in Synechocystis sp. (strain ATCC 27184 / PCC 6803 / Kazusa).